Here is a 583-residue protein sequence, read N- to C-terminus: Hyaluronan synthase-related protein (583 aa).

Over 1 to 29 (MENTTDPENIPVSKPKYPTIRRILSQTFR) the chain is Cytoplasmic. A helical membrane pass occupies residues 30-50 (ILLLFSITTAYVLGYQALCHQ). Residues 51–52 (GL) lie on the Extracellular side of the membrane. Residues 53–73 (LITFGLYGAAMLLHLLMQGIF) traverse the membrane as a helical segment. The Cytoplasmic portion of the chain corresponds to 74-393 (ANLEIRRIEK…CNAQWWHQHH (320 aa)). Residues 394 to 414 (IWMTYESATGIFFPFFVTAVL) traverse the membrane as a helical segment. Over 415-425 (IRLMYSSSLCN) the chain is Extracellular. Residues 426–446 (IVWLFLCIQIMSLLLSLYASW) traverse the membrane as a helical segment. Over 447–457 (QSKKLSMVLMS) the chain is Cytoplasmic. A helical membrane pass occupies residues 458-478 (LYSTLYIIWLLPCQLVALLTI). The Extracellular segment spans residues 479–497 (AKSDWGTSGRKKVVNNYVP). A helical membrane pass occupies residues 498–518 (LFSLSIWAAVLLGGLCYSMYI). Residues 519-535 (GCRKDWSKPQANRELYH) lie on the Cytoplasmic side of the membrane. Residues 536-556 (LLYGCAGYMAYWVLMTVIYCV) form a helical membrane-spanning segment. At 557 to 583 (SGSCCKMRSQAVPQTHDITSLSVSLLV) the chain is on the extracellular side.

Belongs to the NodC/HAS family.

It localises to the membrane. This Xenopus laevis (African clawed frog) protein is Hyaluronan synthase-related protein (has-rs).